A 73-amino-acid polypeptide reads, in one-letter code: Translation initiation factor IF-1 (73 aa).

The region spanning 1–72 is the S1-like domain; it reads MAKDDVIEVE…TKGRITYRFI (72 aa).

Belongs to the IF-1 family. Component of the 30S ribosomal translation pre-initiation complex which assembles on the 30S ribosome in the order IF-2 and IF-3, IF-1 and N-formylmethionyl-tRNA(fMet); mRNA recruitment can occur at any time during PIC assembly.

Its subcellular location is the cytoplasm. Functionally, one of the essential components for the initiation of protein synthesis. Stabilizes the binding of IF-2 and IF-3 on the 30S subunit to which N-formylmethionyl-tRNA(fMet) subsequently binds. Helps modulate mRNA selection, yielding the 30S pre-initiation complex (PIC). Upon addition of the 50S ribosomal subunit IF-1, IF-2 and IF-3 are released leaving the mature 70S translation initiation complex. The polypeptide is Translation initiation factor IF-1 (Lactobacillus acidophilus (strain ATCC 700396 / NCK56 / N2 / NCFM)).